Consider the following 177-residue polypeptide: Adenine phosphoribosyltransferase (177 aa).

Belongs to the purine/pyrimidine phosphoribosyltransferase family. Homodimer.

The protein localises to the cytoplasm. The enzyme catalyses AMP + diphosphate = 5-phospho-alpha-D-ribose 1-diphosphate + adenine. The protein operates within purine metabolism; AMP biosynthesis via salvage pathway; AMP from adenine: step 1/1. Functionally, catalyzes a salvage reaction resulting in the formation of AMP, that is energically less costly than de novo synthesis. This is Adenine phosphoribosyltransferase from Chlorobium chlorochromatii (strain CaD3).